The primary structure comprises 242 residues: Ribosomal RNA small subunit methyltransferase G (242 aa).

S-adenosyl-L-methionine is bound by residues Gly-81, Phe-86, 104–106 (DST), 132–133 (AE), and Arg-151.

It belongs to the methyltransferase superfamily. RNA methyltransferase RsmG family.

It is found in the cytoplasm. In terms of biological role, specifically methylates the N7 position of a guanine in 16S rRNA. In Synechococcus elongatus (strain ATCC 33912 / PCC 7942 / FACHB-805) (Anacystis nidulans R2), this protein is Ribosomal RNA small subunit methyltransferase G.